We begin with the raw amino-acid sequence, 1369 residues long: DNA-directed RNA polymerase subunit beta (1369 aa).

The protein belongs to the RNA polymerase beta chain family. In terms of assembly, the RNAP catalytic core consists of 2 alpha, 1 beta, 1 beta' and 1 omega subunit. When a sigma factor is associated with the core the holoenzyme is formed, which can initiate transcription.

The catalysed reaction is RNA(n) + a ribonucleoside 5'-triphosphate = RNA(n+1) + diphosphate. Its function is as follows. DNA-dependent RNA polymerase catalyzes the transcription of DNA into RNA using the four ribonucleoside triphosphates as substrates. This is DNA-directed RNA polymerase subunit beta from Solidesulfovibrio magneticus (strain ATCC 700980 / DSM 13731 / RS-1) (Desulfovibrio magneticus).